Here is a 215-residue protein sequence, read N- to C-terminus: Ras-related protein Rab-5A (215 aa).

Residues serine 29, alanine 30, glycine 32, lysine 33, serine 34, serine 35, histidine 46, glutamate 47, threonine 52, and glycine 78 each coordinate GTP. Position 34 (serine 34) interacts with Mg(2+). 2 consecutive short sequence motifs (switch) follow at residues 44–56 and 77–93; these read QFHE…IGAA and AGQE…YRGA. Threonine 52 is a binding site for Mg(2+). Position 84 is a phosphoserine (serine 84). Residues asparagine 133, lysine 134, aspartate 136, alanine 164, and lysine 165 each coordinate GTP. Residues 181–215 are disordered; the sequence is LPKNEPQNPGANSARGRGVDLTEPAQPARSQCCSN. S-geranylgeranyl cysteine attachment occurs at residues cysteine 212 and cysteine 213.

The protein belongs to the small GTPase superfamily. Rab family. In terms of assembly, interacts with GDI1; this promotes dissociation from membranes; phosphorylation at Ser-84 disrupts this interaction. Interacts with GDI2; phosphorylation at Ser-84 disrupts the interaction. Interacts with EEA1. Interacts with RIN1 and GAPVD1, which regulate its pathway, probably by acting as a GEF. Interacts with RINL. Interacts with ALS2CL, SUN2, ZFYVE20 and RUFY1. Interacts with RABEP1; one RABEP1 homodimer binds two RAB5A chains, but at opposite sides of the dimer. Interacts with SGSM1 and SGSM3. Interacts with PIK3CB. Interacts with OCRL and INPP5F. May be a component of a complex composed of RAB5A, DYN2 and PIK3C3. Does not interact with BLOC-3 complex (heterodimer of HPS1 and HPS4). Interacts with CLN5. Interacts with APPL2. Interacts with F8A1/F8A2/F8A3. Found in a complex with F8A1/F8A2/F8A3, HTT and RAB5A; mediates the recruitment of HTT by RAB5A onto early endosomes. Interacts with ATP9A. Interacts with PPP1R21; mediates the recruitment of FERRY complex by RAB5A onto early endosomes. Mg(2+) is required as a cofactor. In terms of processing, phosphorylation of Ser-84 in the switch II region by LRRK2 prevents the association of RAB regulatory proteins, including RAB GDP dissociation inhibitors GDI1 and GDI2.

It is found in the cell membrane. The protein localises to the early endosome membrane. The protein resides in the melanosome. It localises to the cytoplasmic vesicle. Its subcellular location is the cell projection. It is found in the ruffle. The protein localises to the membrane. The protein resides in the cytoplasm. It localises to the cytosol. Its subcellular location is the phagosome membrane. It is found in the endosome membrane. It catalyses the reaction GTP + H2O = GDP + phosphate + H(+). Regulated by guanine nucleotide exchange factors (GEFs) including RINL, which promote the exchange of bound GDP for free GTP. Regulated by GTPase activating proteins (GAPs) which increase the GTP hydrolysis activity. Inhibited by GDP dissociation inhibitors (GDIs). Its function is as follows. The small GTPases Rab are key regulators of intracellular membrane trafficking, from the formation of transport vesicles to their fusion with membranes. Rabs cycle between an inactive GDP-bound form and an active GTP-bound form that is able to recruit to membranes different sets of downstream effectors directly responsible for vesicle formation, movement, tethering and fusion. RAB5A is required for the fusion of plasma membranes and early endosomes. Contributes to the regulation of filopodia extension. Required for the exosomal release of SDCBP, CD63, PDCD6IP and syndecan. Regulates maturation of apoptotic cell-containing phagosomes, probably downstream of DYN2 and PIK3C3. The protein is Ras-related protein Rab-5A of Mus musculus (Mouse).